The following is an 82-amino-acid chain: Kappa-actitoxin-Avd4j (82 aa).

The first 19 residues, 1-19 (MNKALFLCLVVLCAAVVFA), serve as a signal peptide directing secretion. Positions 20-31 (AEDLQKAKHAPF) are excised as a propeptide. Disulfide bonds link Cys-38/Cys-73, Cys-40/Cys-66, and Cys-56/Cys-74.

Belongs to the sea anemone type 3 (BDS) potassium channel toxin family. Weakly expressed in the ectodermal tissue from the distal and proximal tentacles, body wall, and oral disk.

The protein resides in the secreted. It localises to the nematocyst. In terms of biological role, blocks Kv3 voltage-gated potassium channels. Reduces blood pressure. This Anemonia viridis (Snakelocks anemone) protein is Kappa-actitoxin-Avd4j.